Reading from the N-terminus, the 31-residue chain is Unknown protein from spot 104 of 2D-PAGE of thylakoid (31 aa).

The protein localises to the plastid. The protein resides in the chloroplast thylakoid. The sequence is that of Unknown protein from spot 104 of 2D-PAGE of thylakoid from Pisum sativum (Garden pea).